A 706-amino-acid polypeptide reads, in one-letter code: UvrABC system protein C (706 aa).

One can recognise a GIY-YIG domain in the interval 16 to 95 (VEPGVYRFRD…IKEFDPRFNV (80 aa)). Residues 208–243 (DRLAKDMEQQMTAAAEQLDFERAARLRDDISALKRA) enclose the UVR domain. Residues 651–706 (APQNGTAPDPAPGTGDPQTPADPHSAATAADIEDDRHATGATGPQMNGSEQQVDRV) form a disordered region. A compositionally biased stretch (polar residues) spans 692-706 (TGPQMNGSEQQVDRV).

Belongs to the UvrC family. As to quaternary structure, interacts with UvrB in an incision complex.

It is found in the cytoplasm. The UvrABC repair system catalyzes the recognition and processing of DNA lesions. UvrC both incises the 5' and 3' sides of the lesion. The N-terminal half is responsible for the 3' incision and the C-terminal half is responsible for the 5' incision. The polypeptide is UvrABC system protein C (Mycolicibacterium smegmatis (strain ATCC 700084 / mc(2)155) (Mycobacterium smegmatis)).